Reading from the N-terminus, the 239-residue chain is SkfA peptide export ATP-binding protein SkfE (239 aa).

In terms of domain architecture, ABC transporter spans 4–232 (MQVQNLSKCY…AEWRKEVIRL (229 aa)). Position 36 to 43 (36 to 43 (GPNGAGKT)) interacts with ATP.

It belongs to the ABC transporter superfamily. SkfA peptide export (TC 3.A.1.128.1) family.

The protein resides in the cell membrane. The enzyme catalyses sulfate(out) + ATP + H2O = sulfate(in) + ADP + phosphate + H(+). The catalysed reaction is thiosulfate(out) + ATP + H2O = thiosulfate(in) + ADP + phosphate + H(+). Its function is as follows. Probably part of the ABC transporter SkfEF involved in the export of the bacteriocin SKF. Probably responsible for energy coupling to the transport system. This chain is SkfA peptide export ATP-binding protein SkfE, found in Bacillus subtilis (strain 168).